A 257-amino-acid chain; its full sequence is 3-methyl-2-oxobutanoate hydroxymethyltransferase (257 aa).

Residues D42 and D81 each coordinate Mg(2+). 3-methyl-2-oxobutanoate-binding positions include 42–43, D81, and K110; that span reads DS. E112 is a Mg(2+) binding site. E176 serves as the catalytic Proton acceptor.

This sequence belongs to the PanB family. As to quaternary structure, homodecamer; pentamer of dimers. The cofactor is Mg(2+).

The protein localises to the cytoplasm. The enzyme catalyses 3-methyl-2-oxobutanoate + (6R)-5,10-methylene-5,6,7,8-tetrahydrofolate + H2O = 2-dehydropantoate + (6S)-5,6,7,8-tetrahydrofolate. Its pathway is cofactor biosynthesis; (R)-pantothenate biosynthesis; (R)-pantoate from 3-methyl-2-oxobutanoate: step 1/2. In terms of biological role, catalyzes the reversible reaction in which hydroxymethyl group from 5,10-methylenetetrahydrofolate is transferred onto alpha-ketoisovalerate to form ketopantoate. In Pelagibacter ubique (strain HTCC1062), this protein is 3-methyl-2-oxobutanoate hydroxymethyltransferase.